A 122-amino-acid chain; its full sequence is Holo-[acyl-carrier-protein] synthase (122 aa).

2 residues coordinate Mg(2+): Asp8 and Glu55.

It belongs to the P-Pant transferase superfamily. AcpS family. The cofactor is Mg(2+).

The protein localises to the cytoplasm. The enzyme catalyses apo-[ACP] + CoA = holo-[ACP] + adenosine 3',5'-bisphosphate + H(+). Functionally, transfers the 4'-phosphopantetheine moiety from coenzyme A to a Ser of acyl-carrier-protein. The protein is Holo-[acyl-carrier-protein] synthase of Fusobacterium nucleatum subsp. nucleatum (strain ATCC 25586 / DSM 15643 / BCRC 10681 / CIP 101130 / JCM 8532 / KCTC 2640 / LMG 13131 / VPI 4355).